Consider the following 382-residue polypeptide: 2-heptyl-3-hydroxy-4(1H)-quinolone synthase (382 aa).

The protein belongs to the 3-hydroxybenzoate 6-hydroxylase family.

The enzyme catalyses 2-heptyl-4(1H)-quinolone + NADH + O2 + H(+) = 2-heptyl-3-hydroxy-4(1H)-quinolone + NAD(+) + H2O. In terms of biological role, involved in the terminal step of the biosynthesis of quinolone which in addition to serve as a potent signal for quorum sensing, chelates iron and promotes the formation of membrane vesicles (MVs). Catalyzes the hydroxylation of 2-heptyl-4-quinolone (C7-HHQ) to yield 2-heptyl-3-hydroxy-4-quinolone (PQS). PqsH is also able to hydroxylate HHQ analogs having alkyl side-chain lengths of 3 (C3-HHQ), 5 (C5-HHQ) and 9 (C9-HHQ) carbons, however catalytic efficiencies are significantly reduced for substrates with alkyl side-chain lengths below 7 carbons. This is 2-heptyl-3-hydroxy-4(1H)-quinolone synthase (pqsH) from Pseudomonas aeruginosa (strain UCBPP-PA14).